The primary structure comprises 134 residues: Aspartate 1-decarboxylase (134 aa).

Ser-25 serves as the catalytic Schiff-base intermediate with substrate; via pyruvic acid. Residue Ser-25 is modified to Pyruvic acid (Ser). Thr-57 contacts substrate. Tyr-58 (proton donor) is an active-site residue. Residue 73–75 (GAA) coordinates substrate.

This sequence belongs to the PanD family. In terms of assembly, heterooctamer of four alpha and four beta subunits. The cofactor is pyruvate. Post-translationally, is synthesized initially as an inactive proenzyme, which is activated by self-cleavage at a specific serine bond to produce a beta-subunit with a hydroxyl group at its C-terminus and an alpha-subunit with a pyruvoyl group at its N-terminus.

Its subcellular location is the cytoplasm. The enzyme catalyses L-aspartate + H(+) = beta-alanine + CO2. It participates in cofactor biosynthesis; (R)-pantothenate biosynthesis; beta-alanine from L-aspartate: step 1/1. Functionally, catalyzes the pyruvoyl-dependent decarboxylation of aspartate to produce beta-alanine. The sequence is that of Aspartate 1-decarboxylase from Citrifermentans bemidjiense (strain ATCC BAA-1014 / DSM 16622 / JCM 12645 / Bem) (Geobacter bemidjiensis).